The sequence spans 67 residues: Large ribosomal subunit protein bL35 (67 aa).

It belongs to the bacterial ribosomal protein bL35 family.

This chain is Large ribosomal subunit protein bL35, found in Caldanaerobacter subterraneus subsp. tengcongensis (strain DSM 15242 / JCM 11007 / NBRC 100824 / MB4) (Thermoanaerobacter tengcongensis).